A 338-amino-acid polypeptide reads, in one-letter code: Taste receptor type 2 member 39 (338 aa).

The Extracellular segment spans residues 1 to 30; sequence MLGRCFPPDTKEKQQLRMTKLCDPAESELS. Residues 31–51 form a helical membrane-spanning segment; sequence PFLITLILAVLLAEYLIGIIA. Residues 52–74 are Cytoplasmic-facing; that stretch reads NGFIMAIHAAEWVQNKAVSTSGR. Residues 75–95 traverse the membrane as a helical segment; it reads ILVFLSVSRIALQSLMMLEIT. At 96-116 the chain is on the extracellular side; that stretch reads ISSTSLSFYSEDAVYYAFKIS. Residues 117-137 form a helical membrane-spanning segment; it reads FIFLNFCSLWFAAWLSFFYFV. The Cytoplasmic portion of the chain corresponds to 138-156; it reads KIANFSYPLFLKLRWRITG. Residues 157-177 traverse the membrane as a helical segment; the sequence is LIPWLLWLSVFISFSHSMFCI. Residues 178 to 205 are Extracellular-facing; the sequence is NICTVYCNNSFPIHSSNSTKKTYLSEIN. N-linked (GlcNAc...) asparagine glycosylation is found at Asn-185 and Asn-194. Residues 206–226 form a helical membrane-spanning segment; that stretch reads VVGLAFFFNLGIVTPLIMFIL. The Cytoplasmic portion of the chain corresponds to 227-262; it reads TATLLILSLKRHTLHMGSNATGSNDPSMEAHMGAIK. The chain crosses the membrane as a helical span at residues 263–283; the sequence is AISYFLILYIFNAVALFIYLS. At 284-291 the chain is on the extracellular side; that stretch reads NMFDINSL. Residues 292–312 traverse the membrane as a helical segment; it reads WNNLCQIIMAAYPASHSILLI. Topologically, residues 313–338 are cytoplasmic; that stretch reads QDNPGLRRAWKRLQLRLHLYPKEWTL.

This sequence belongs to the G-protein coupled receptor T2R family. In terms of tissue distribution, expressed in subsets of taste receptor cells of the tongue and exclusively in gustducin-positive cells.

The protein localises to the membrane. In terms of biological role, receptor that may play a role in the perception of bitterness and is gustducin-linked. May play a role in sensing the chemical composition of the gastrointestinal content. The activity of this receptor may stimulate alpha gustducin, mediate PLC-beta-2 activation and lead to the gating of TRPM5. The chain is Taste receptor type 2 member 39 (TAS2R39) from Homo sapiens (Human).